Consider the following 44-residue polypeptide: Large ribosomal subunit protein bL34 (44 aa).

Residues Met1–Asp26 form a disordered region. Basic residues predominate over residues Asn9–Met22.

This sequence belongs to the bacterial ribosomal protein bL34 family.

This chain is Large ribosomal subunit protein bL34, found in Trichormus variabilis (strain ATCC 29413 / PCC 7937) (Anabaena variabilis).